The following is a 176-amino-acid chain: NAD(P)H-quinone oxidoreductase subunit 6, chloroplastic (176 aa).

5 helical membrane passes run 10-30, 32-52, 61-81, 92-112, and 152-172; these read FLLV…VLLP, PIYS…FYIL, AQLL…VMFI, LWTV…VSLI, and FFLP…GAIA.

Belongs to the complex I subunit 6 family. NDH is composed of at least 16 different subunits, 5 of which are encoded in the nucleus.

Its subcellular location is the plastid. It localises to the chloroplast thylakoid membrane. It catalyses the reaction a plastoquinone + NADH + (n+1) H(+)(in) = a plastoquinol + NAD(+) + n H(+)(out). The catalysed reaction is a plastoquinone + NADPH + (n+1) H(+)(in) = a plastoquinol + NADP(+) + n H(+)(out). Functionally, NDH shuttles electrons from NAD(P)H:plastoquinone, via FMN and iron-sulfur (Fe-S) centers, to quinones in the photosynthetic chain and possibly in a chloroplast respiratory chain. The immediate electron acceptor for the enzyme in this species is believed to be plastoquinone. Couples the redox reaction to proton translocation, and thus conserves the redox energy in a proton gradient. This Lactuca sativa (Garden lettuce) protein is NAD(P)H-quinone oxidoreductase subunit 6, chloroplastic (ndhG).